Reading from the N-terminus, the 80-residue chain is D-alanyl carrier protein (80 aa).

Residues 1–77 form the Carrier domain; the sequence is MDIQKQIVDI…KLVEQVKKLQ (77 aa). S35 bears the O-(pantetheine 4'-phosphoryl)serine mark.

It belongs to the DltC family. 4'-phosphopantetheine is transferred from CoA to a specific serine of apo-DCP.

It localises to the cytoplasm. It participates in cell wall biogenesis; lipoteichoic acid biosynthesis. Functionally, carrier protein involved in the D-alanylation of lipoteichoic acid (LTA). The loading of thioester-linked D-alanine onto DltC is catalyzed by D-alanine--D-alanyl carrier protein ligase DltA. The DltC-carried D-alanyl group is further transferred to cell membrane phosphatidylglycerol (PG) by forming an ester bond, probably catalyzed by DltD. D-alanylation of LTA plays an important role in modulating the properties of the cell wall in Gram-positive bacteria, influencing the net charge of the cell wall. This chain is D-alanyl carrier protein, found in Lactobacillus delbrueckii subsp. bulgaricus (strain ATCC 11842 / DSM 20081 / BCRC 10696 / JCM 1002 / NBRC 13953 / NCIMB 11778 / NCTC 12712 / WDCM 00102 / Lb 14).